Consider the following 332-residue polypeptide: Glyceraldehyde-3-phosphate dehydrogenase 2 (332 aa).

Residues 11-12, D32, and R77 contribute to the NAD(+) site; that span reads RI. D-glyceraldehyde 3-phosphate contacts are provided by residues 148–150, T179, 208–209, and R231; these read SCT and TG. C149 acts as the Nucleophile in catalysis. A Phosphotyrosine modification is found at Y273. T274 carries the post-translational modification Phosphothreonine. NAD(+) is bound at residue N313.

The protein belongs to the glyceraldehyde-3-phosphate dehydrogenase family. Homotetramer.

It is found in the cytoplasm. The enzyme catalyses D-glyceraldehyde 3-phosphate + phosphate + NAD(+) = (2R)-3-phospho-glyceroyl phosphate + NADH + H(+). It participates in carbohydrate degradation; glycolysis; pyruvate from D-glyceraldehyde 3-phosphate: step 1/5. The chain is Glyceraldehyde-3-phosphate dehydrogenase 2 (Gapdh2) from Drosophila melanogaster (Fruit fly).